Reading from the N-terminus, the 78-residue chain is MSRVCQVTGKKPMVGNNRSHAKNSTRRRFLPNLQNHRFWLEEEKRFVQLRVSTKGIRIIDKKGIEVIVKELRARGEKV.

Positions 1-23 (MSRVCQVTGKKPMVGNNRSHAKN) are disordered.

The protein belongs to the bacterial ribosomal protein bL28 family.

The chain is Large ribosomal subunit protein bL28 from Shewanella frigidimarina (strain NCIMB 400).